The primary structure comprises 736 residues: Prolyl oligopeptidase dbiP (736 aa).

Active-site charge relay system residues include Ser-572, Asp-656, and His-692.

The protein belongs to the peptidase S9A family. Monomer.

It catalyses the reaction Hydrolysis of Pro-|-Xaa &gt;&gt; Ala-|-Xaa in oligopeptides.. The protein operates within mycotoxin biosynthesis. Functionally, prolyl oligopeptidase; part of the gene cluster that mediates the biosynthesis of dendrothelin A, a highly methylated cyclic dodecapeptide showing slight nematodicidal activity. Excises and catalyzes the macrocyclization of the methylated core peptide of dbiMA to yield dendrothelin A. DbiP works in a two-step fashion with an initial cleavage at the N-terminus, followed by a second cleavage at the C-terminus of the core peptide. According to this mechanism, the free N-terminus of the core peptide, generated by the first cleavage, attacks the covalent intermediate of the second cleavage, which results in macrocyclization of the core peptide. In Dendrothele bispora (strain CBS 962.96), this protein is Prolyl oligopeptidase dbiP.